Reading from the N-terminus, the 188-residue chain is Pyridoxal 5'-phosphate synthase subunit PdxT (188 aa).

Residue 47–49 (GES) participates in L-glutamine binding. The active-site Nucleophile is Cys79. L-glutamine contacts are provided by residues Arg105 and 134 to 135 (IR). Catalysis depends on charge relay system residues His170 and Glu172.

Belongs to the glutaminase PdxT/SNO family. As to quaternary structure, in the presence of PdxS, forms a dodecamer of heterodimers. Only shows activity in the heterodimer.

The enzyme catalyses aldehydo-D-ribose 5-phosphate + D-glyceraldehyde 3-phosphate + L-glutamine = pyridoxal 5'-phosphate + L-glutamate + phosphate + 3 H2O + H(+). The catalysed reaction is L-glutamine + H2O = L-glutamate + NH4(+). It functions in the pathway cofactor biosynthesis; pyridoxal 5'-phosphate biosynthesis. Functionally, catalyzes the hydrolysis of glutamine to glutamate and ammonia as part of the biosynthesis of pyridoxal 5'-phosphate. The resulting ammonia molecule is channeled to the active site of PdxS. In Listeria welshimeri serovar 6b (strain ATCC 35897 / DSM 20650 / CCUG 15529 / CIP 8149 / NCTC 11857 / SLCC 5334 / V8), this protein is Pyridoxal 5'-phosphate synthase subunit PdxT.